The primary structure comprises 295 residues: Beta-lactamase-like protein 2 homolog (295 aa).

Positions 79, 81, 83, 84, 141, 160, and 195 each coordinate Zn(2+).

This sequence belongs to the metallo-beta-lactamase superfamily. Glyoxalase II family.

The chain is Beta-lactamase-like protein 2 homolog from Caenorhabditis elegans.